The following is a 397-amino-acid chain: DnaJ homolog subfamily A member 1 (397 aa).

The J domain occupies 6-68; that stretch reads TYYDVLGVKP…KKRELYDKGG (63 aa). At Lys-66 the chain carries N6-acetyllysine. Ser-83 bears the Phosphoserine mark. The CR-type zinc finger occupies 121 to 205; it reads GATRKLALQK…CNGRKIVREK (85 aa). The Zn(2+) site is built by Cys-134, Cys-137, Cys-150, Cys-153, Cys-177, Cys-180, Cys-193, and Cys-196. CXXCXGXG motif repeat units lie at residues 134 to 141, 150 to 157, 177 to 184, and 193 to 200; these read CDKCEGRG, CPNCRGTG, CMECQGHG, and CKSCNGRK. At Ser-335 the chain carries Phosphoserine. The interval 352–397 is disordered; that stretch reads VEETDEMDQVELVDFDPNQERRRHYNGEAYEDDEHHPRGGVQCQTS. Positions 353 to 365 are enriched in acidic residues; it reads EETDEMDQVELVD. Phosphotyrosine is present on Tyr-381. Cys-394 carries the post-translational modification Cysteine methyl ester. The S-farnesyl cysteine moiety is linked to residue Cys-394. Residues 395 to 397 constitute a propeptide, removed in mature form; the sequence is QTS.

Identified in a complex with HSPA1B and BAX. Interacts with RNF207.

It localises to the membrane. It is found in the cytoplasm. The protein resides in the microsome. Its subcellular location is the mitochondrion. The protein localises to the nucleus. It localises to the perinuclear region. Its function is as follows. Co-chaperone for HSPA8/Hsc70. Plays a role in protein transport into mitochondria via its role as co-chaperone. Stimulates ATP hydrolysis, but not the folding of unfolded proteins mediated by HSPA1A (in vitro). Promotes apoptosis in response to cellular stress mediated by exposure to anisomycin or UV. Functions as co-chaperone for HSPA1B and negatively regulates the translocation of BAX from the cytosol to mitochondria in response to cellular stress, thereby protecting cells against apoptosis. This chain is DnaJ homolog subfamily A member 1 (Dnaja1), found in Mus musculus (Mouse).